The primary structure comprises 443 residues: Ribosomal protein uS12 methylthiotransferase RimO (443 aa).

The MTTase N-terminal domain maps to 1–116; sequence MKFHLISLGC…IAEYVGKLIA (116 aa). 6 residues coordinate [4Fe-4S] cluster: C10, C45, C79, C154, C158, and C161. A Radical SAM core domain is found at 140–370; the sequence is STPFFRAWVK…LELQQELSTE (231 aa). In terms of domain architecture, TRAM spans 373–441; sequence KKYVGTVQKV…QYDLVGGVVS (69 aa).

This sequence belongs to the methylthiotransferase family. RimO subfamily. The cofactor is [4Fe-4S] cluster.

The protein resides in the cytoplasm. The enzyme catalyses L-aspartate(89)-[ribosomal protein uS12]-hydrogen + (sulfur carrier)-SH + AH2 + 2 S-adenosyl-L-methionine = 3-methylsulfanyl-L-aspartate(89)-[ribosomal protein uS12]-hydrogen + (sulfur carrier)-H + 5'-deoxyadenosine + L-methionine + A + S-adenosyl-L-homocysteine + 2 H(+). Catalyzes the methylthiolation of an aspartic acid residue of ribosomal protein uS12. This chain is Ribosomal protein uS12 methylthiotransferase RimO, found in Desulfotalea psychrophila (strain LSv54 / DSM 12343).